The chain runs to 302 residues: N-acetyl-D-glucosamine kinase (302 aa).

ATP is bound by residues 4–11 (GFDVGGTK) and 133–140 (GFGGGLVF). 4 residues coordinate Zn(2+): histidine 157, cysteine 177, cysteine 179, and cysteine 184.

Belongs to the ROK (NagC/XylR) family. NagK subfamily.

The enzyme catalyses N-acetyl-D-glucosamine + ATP = N-acetyl-D-glucosamine 6-phosphate + ADP + H(+). It functions in the pathway cell wall biogenesis; peptidoglycan recycling. Functionally, catalyzes the phosphorylation of N-acetyl-D-glucosamine (GlcNAc) derived from cell-wall degradation, yielding GlcNAc-6-P. This Aliivibrio salmonicida (strain LFI1238) (Vibrio salmonicida (strain LFI1238)) protein is N-acetyl-D-glucosamine kinase.